A 410-amino-acid polypeptide reads, in one-letter code: Histidine--tRNA ligase (410 aa).

Belongs to the class-II aminoacyl-tRNA synthetase family. In terms of assembly, homodimer.

The protein resides in the cytoplasm. The catalysed reaction is tRNA(His) + L-histidine + ATP = L-histidyl-tRNA(His) + AMP + diphosphate + H(+). The sequence is that of Histidine--tRNA ligase from Elusimicrobium minutum (strain Pei191).